The sequence spans 479 residues: Adenosylhomocysteinase (479 aa).

Residues threonine 66, aspartate 142, and glutamate 203 each contribute to the substrate site. 204–206 provides a ligand contact to NAD(+); that stretch reads TTT. 2 residues coordinate substrate: lysine 233 and aspartate 237. Residues asparagine 238, 267 to 272, glutamate 290, asparagine 325, 346 to 348, and asparagine 394 contribute to the NAD(+) site; these read GYGDVG and IGH.

This sequence belongs to the adenosylhomocysteinase family. The cofactor is NAD(+).

It is found in the cytoplasm. It carries out the reaction S-adenosyl-L-homocysteine + H2O = L-homocysteine + adenosine. The protein operates within amino-acid biosynthesis; L-homocysteine biosynthesis; L-homocysteine from S-adenosyl-L-homocysteine: step 1/1. May play a key role in the regulation of the intracellular concentration of adenosylhomocysteine. The polypeptide is Adenosylhomocysteinase (Oleidesulfovibrio alaskensis (strain ATCC BAA-1058 / DSM 17464 / G20) (Desulfovibrio alaskensis)).